Consider the following 551-residue polypeptide: MSNYAPFIKPYVEYNEHGWGPCEVPELDVPYQPFCKGDRLGKICDWTVSLPEKKFPSKYASTFGNSSQYAYFYEDDDSTFHLVDTTGSKAFKPYQRGRYRPNVRNNVRARGRTGRGNATLGGLGGPVAGGSTANSTKYGKGRNTRNAQNMGRRFGRNAPTRLRESSVMVQSDWVSIEEIDFPRLLKLALPNIKEGKDIATCGSLEYYDKLYDRVNLRNEKPLLKMDRVVHTVTTTDDPVIRRLSKTMGNVFATDEILATIMCCTRSNYSWDVVIEKLGTKVFLDKRDNDQFDLLTVNETSLEPPMDEEGSINSAHSLAMEATLINHNFSQQVLRIGDQEPRFKFEEPNPFEEQGVDLASMGYRYRQWDLGNEVVLIARCKHNGVVQGPNGDMQFLSIKALNEWDSKVTNSVEWRQKLDTQRGAVLASELRNNACKLARWTVEAVLAGSDQLKLGYVSRVNPRDHLRHVILGTQQFKPQEFATQINLNMDNAWGVLRCLIDIVMKQPDGKYLIMKDPNKSMIRLYDIPENAFDSDGDDESESSEPFGNSIDN.

The disordered stretch occupies residues 108 to 152; the sequence is RARGRTGRGNATLGGLGGPVAGGSTANSTKYGKGRNTRNAQNMGR. Over residues 119–128 the composition is skewed to gly residues; that stretch reads TLGGLGGPVA. Residues 290 to 304 are RNA gate; it reads QFDLLTVNETSLEPP. Positions 530–551 are disordered; sequence AFDSDGDDESESSEPFGNSIDN. Residues 531–541 are compositionally biased toward acidic residues; the sequence is FDSDGDDESES.

Belongs to the eIF-3 subunit D family. As to quaternary structure, component of the eukaryotic translation initiation factor 3 (eIF-3) complex. The eIF-3 complex interacts with pix.

The protein resides in the cytoplasm. Functionally, mRNA cap-binding component of the eukaryotic translation initiation factor 3 (eIF-3) complex, which is involved in protein synthesis of a specialized repertoire of mRNAs and, together with other initiation factors, stimulates binding of mRNA and methionyl-tRNAi to the 40S ribosome. The eIF-3 complex specifically targets and initiates translation of a subset of mRNAs involved in cell proliferation. In the eIF-3 complex, eif3d specifically recognizes and binds the 7-methylguanosine cap of a subset of mRNAs. The polypeptide is Eukaryotic translation initiation factor 3 subunit D-2 (Drosophila yakuba (Fruit fly)).